We begin with the raw amino-acid sequence, 608 residues long: DNA mismatch repair protein MutL (608 aa).

Belongs to the DNA mismatch repair MutL/HexB family.

This protein is involved in the repair of mismatches in DNA. It is required for dam-dependent methyl-directed DNA mismatch repair. May act as a 'molecular matchmaker', a protein that promotes the formation of a stable complex between two or more DNA-binding proteins in an ATP-dependent manner without itself being part of a final effector complex. This Anoxybacillus flavithermus (strain DSM 21510 / WK1) protein is DNA mismatch repair protein MutL.